We begin with the raw amino-acid sequence, 300 residues long: Cation-efflux pump FieF (300 aa).

A helical transmembrane segment spans residues 24-44; that stretch reads LLIKIFAWWYTGSVSILAALV. Positions 45 and 49 each coordinate Zn(2+). The next 2 membrane-spanning stretches (helical) occupy residues 82-102 and 114-134; these read AALAQSMFISGSALFLFLTSI and PGVGIGVTVIALICTIILVTF. Zn(2+) is bound by residues His-153 and Asp-157. 2 helical membrane-spanning segments follow: residues 156 to 176 and 178 to 198; these read SDVMMNGAILIALGLSWYGWH and ADALFALGIGIYILYSALRMG.

The protein belongs to the cation diffusion facilitator (CDF) transporter (TC 2.A.4) family. FieF subfamily. In terms of assembly, homodimer.

The protein resides in the cell inner membrane. It catalyses the reaction Zn(2+)(in) + H(+)(out) = Zn(2+)(out) + H(+)(in). It carries out the reaction Cd(2+)(in) + H(+)(out) = Cd(2+)(out) + H(+)(in). The enzyme catalyses Fe(2+)(in) + H(+)(out) = Fe(2+)(out) + H(+)(in). In terms of biological role, divalent metal cation transporter which exports Zn(2+), Cd(2+) and possibly Fe(2+). May be involved in zinc and iron detoxification by efflux. This is Cation-efflux pump FieF from Salmonella schwarzengrund (strain CVM19633).